A 395-amino-acid chain; its full sequence is Envelope glycoprotein D (395 aa).

The first 17 residues, 1–17, serve as a signal peptide directing secretion; that stretch reads MGSGIAAVLLSLAVALA. The Virion surface portion of the chain corresponds to 18-342; it reads RVPAGEGEYV…PAPAPSGHTG (325 aa). Residue H63 participates in Zn(2+) binding. Intrachain disulfides connect C90–C214, C131–C227, and C143–C152. N119 carries an N-linked (GlcNAc...) asparagine; by host glycan. D240 serves as a coordination point for Zn(2+). The segment at 261 to 306 is profusion; it reads LQAAGWHGPKAPFTSTLLPPEVVETANVTRPELAPEERGTSRTPGD. An N-linked (GlcNAc...) asparagine; by host glycan is attached at N287. A disordered region spans residues 289-314; it reads TRPELAPEERGTSRTPGDEPAPAVAA. Residues 343 to 362 traverse the membrane as a helical segment; it reads AVVGALAGAGLAAGVVVLAV. At 363–395 the chain is on the intravirion side; it reads YLVRRRGRAAGKHVRLPELLEEAHGPARRGAPY.

This sequence belongs to the herpesviridae glycoprotein D family.

Its subcellular location is the virion membrane. Its function is as follows. Envelope glycoprotein that binds to host cell entry receptors, promoting the virus entry into host cells. May trigger fusion with host membrane, by recruiting the fusion machinery composed of gB and gH/gL. The polypeptide is Envelope glycoprotein D (gD) (Cercopithecine herpesvirus 1 (CeHV-1)).